The primary structure comprises 498 residues: GTPase Der (498 aa).

EngA-type G domains lie at 3–167 (PVVA…FDDL) and 210–383 (IKLA…KSAT). Residues 9 to 16 (GRPNVGKS), 57 to 61 (DTGGI), 119 to 122 (NKID), 216 to 223 (GRPNVGKS), 263 to 267 (DTAGV), and 328 to 331 (NKWD) each bind GTP. The KH-like domain maps to 384 to 468 (TRVGTSVLTR…PIRINFQNSD (85 aa)).

The protein belongs to the TRAFAC class TrmE-Era-EngA-EngB-Septin-like GTPase superfamily. EngA (Der) GTPase family. Associates with the 50S ribosomal subunit.

Functionally, GTPase that plays an essential role in the late steps of ribosome biogenesis. The sequence is that of GTPase Der from Vibrio campbellii (strain ATCC BAA-1116).